Consider the following 440-residue polypeptide: uncharacterized protein (440 aa).

This is an uncharacterized protein from Saccharolobus islandicus (Sulfolobus islandicus).